Reading from the N-terminus, the 357-residue chain is Fructose-bisphosphate aldolase (357 aa).

Substrate is bound by residues R49 and K140. The Proton acceptor role is filled by E183. The Schiff-base intermediate with dihydroxyacetone-P role is filled by K225.

It belongs to the class I fructose-bisphosphate aldolase family.

It carries out the reaction beta-D-fructose 1,6-bisphosphate = D-glyceraldehyde 3-phosphate + dihydroxyacetone phosphate. It participates in carbohydrate degradation; glycolysis; D-glyceraldehyde 3-phosphate and glycerone phosphate from D-glucose: step 4/4. This chain is Fructose-bisphosphate aldolase (fba), found in Dictyostelium discoideum (Social amoeba).